Reading from the N-terminus, the 102-residue chain is NADH-quinone oxidoreductase subunit K (102 aa).

3 consecutive transmembrane segments (helical) span residues 5–25, 31–51, and 62–82; these read LAHYLILGAILFAIGIFGIFL, IILLMSIELMLLAVNMNFVAF, and VFVFFILTVAAAEAAIGLAIL.

The protein belongs to the complex I subunit 4L family. As to quaternary structure, NDH-1 is composed of 14 different subunits. Subunits NuoA, H, J, K, L, M, N constitute the membrane sector of the complex.

The protein resides in the cell inner membrane. The catalysed reaction is a quinone + NADH + 5 H(+)(in) = a quinol + NAD(+) + 4 H(+)(out). In terms of biological role, NDH-1 shuttles electrons from NADH, via FMN and iron-sulfur (Fe-S) centers, to quinones in the respiratory chain. The immediate electron acceptor for the enzyme in this species is believed to be ubiquinone. Couples the redox reaction to proton translocation (for every two electrons transferred, four hydrogen ions are translocated across the cytoplasmic membrane), and thus conserves the redox energy in a proton gradient. The polypeptide is NADH-quinone oxidoreductase subunit K (Bordetella avium (strain 197N)).